Reading from the N-terminus, the 248-residue chain is Transcription factor cicD (248 aa).

Residues Met-1 to Val-22 are compositionally biased toward basic and acidic residues. The tract at residues Met-1–Gly-25 is disordered. Residues Asp-19–Gly-74 enclose the HTH myb-type domain. The segment at residues Trp-46–Ser-70 is a DNA-binding region (H-T-H motif). The segment at Ser-186–Asp-208 is disordered.

Its subcellular location is the nucleus. Its function is as follows. Transcription factor that regulates the expression of the gene cluster that mediates the biosynthesis of cichorine, a phytotoxin active against knapweed, corn, and soybeans. This is Transcription factor cicD from Emericella nidulans (strain FGSC A4 / ATCC 38163 / CBS 112.46 / NRRL 194 / M139) (Aspergillus nidulans).